A 338-amino-acid chain; its full sequence is Ketol-acid reductoisomerase (NADP(+)) (338 aa).

The KARI N-terminal Rossmann domain occupies 1 to 181 (MKVYYDKDCD…GGGRTGIIET (181 aa)). Residues 24–27 (YGSQ), Arg-47, Ser-50, Thr-52, and 82–85 (DEFQ) each bind NADP(+). Residue His-107 is part of the active site. Residue Gly-133 participates in NADP(+) binding. A KARI C-terminal knotted domain is found at 182-327 (TFKDETETDL…EQLRAMMPWI (146 aa)). Residues Asp-190, Glu-194, Glu-226, and Glu-230 each contribute to the Mg(2+) site. Ser-251 is a substrate binding site.

This sequence belongs to the ketol-acid reductoisomerase family. Requires Mg(2+) as cofactor.

The enzyme catalyses (2R)-2,3-dihydroxy-3-methylbutanoate + NADP(+) = (2S)-2-acetolactate + NADPH + H(+). The catalysed reaction is (2R,3R)-2,3-dihydroxy-3-methylpentanoate + NADP(+) = (S)-2-ethyl-2-hydroxy-3-oxobutanoate + NADPH + H(+). Its pathway is amino-acid biosynthesis; L-isoleucine biosynthesis; L-isoleucine from 2-oxobutanoate: step 2/4. It participates in amino-acid biosynthesis; L-valine biosynthesis; L-valine from pyruvate: step 2/4. In terms of biological role, involved in the biosynthesis of branched-chain amino acids (BCAA). Catalyzes an alkyl-migration followed by a ketol-acid reduction of (S)-2-acetolactate (S2AL) to yield (R)-2,3-dihydroxy-isovalerate. In the isomerase reaction, S2AL is rearranged via a Mg-dependent methyl migration to produce 3-hydroxy-3-methyl-2-ketobutyrate (HMKB). In the reductase reaction, this 2-ketoacid undergoes a metal-dependent reduction by NADPH to yield (R)-2,3-dihydroxy-isovalerate. In Ectopseudomonas mendocina (strain ymp) (Pseudomonas mendocina), this protein is Ketol-acid reductoisomerase (NADP(+)).